A 135-amino-acid polypeptide reads, in one-letter code: Cofilin-4 (135 aa).

Positions 3-135 (SCASINDEVI…SQSLVEERCK (133 aa)) constitute an ADF-H domain.

This sequence belongs to the actin-binding proteins ADF family.

Its subcellular location is the cytoplasm. The protein localises to the cytoskeleton. In terms of biological role, controls actin polymerization and depolymerization. This chain is Cofilin-4 (cofE), found in Dictyostelium discoideum (Social amoeba).